The following is an 87-amino-acid chain: Small ribosomal subunit protein uS15c (87 aa).

This sequence belongs to the universal ribosomal protein uS15 family. In terms of assembly, part of the 30S ribosomal subunit.

It localises to the plastid. Its subcellular location is the chloroplast. In Amborella trichopoda, this protein is Small ribosomal subunit protein uS15c (rps15).